Consider the following 1035-residue polypeptide: Cell-division control histidine kinase PdhS (1035 aa).

The important for polar localization stretch occupies residues 1 to 613 (MSGSYPFIDI…HADGSEEPVD (613 aa)). A disordered region spans residues 500–533 (QGLANTRAESETPVSETSSIEPVEPTPPVKTRSE). Residues 614-1035 (AHLNAIAWRG…VFPPTRVLAD (422 aa)) are interaction with DivK. Positions 659-730 (HVEELKTILD…YLHGLSGNGV (72 aa)) constitute a PAS domain. The Histidine kinase domain occupies 802–1031 (RISHEIRTPL…VVEIVFPPTR (230 aa)). Position 805 is a phosphohistidine; by autocatalysis (histidine 805).

In terms of assembly, interacts with DivK.

Its subcellular location is the cytoplasm. The enzyme catalyses ATP + protein L-histidine = ADP + protein N-phospho-L-histidine.. Its function is as follows. Functions as a polar differentiation marker. Essential protein that, by localizing in the old pole of dividing cells, controls cell division and maturation, probably through control of DivK phosphorylation status and cellular distribution, which in turn regulates CtrA, a transcriptional regulator of the minB operon. The asymmetrical localization of this protein is probably required for cells to enter a new division cycle. The protein is Cell-division control histidine kinase PdhS (pdhS) of Brucella abortus (strain S19).